A 248-amino-acid polypeptide reads, in one-letter code: Isopentenyl phosphate kinase (248 aa).

7-11 is a binding site for ATP; that stretch reads KLGGS. Gly49 lines the substrate pocket. Gly50 serves as a coordination point for ATP. Residues His54 and Gly152 each contribute to the substrate site. Residues Gly209 and Lys213 each contribute to the ATP site.

This sequence belongs to the isopentenyl phosphate kinase family. As to quaternary structure, homodimer.

It carries out the reaction isopentenyl phosphate + ATP = isopentenyl diphosphate + ADP. Catalyzes the phosphorylation of isopentenyl phosphate (IP) to isopentenyl diphosphate (IPP). Functions in an alternate mevalonate (MVA) pathway leading to IPP, a key precursor for the biosynthesis of isoprenoid compounds such as archaeal membrane lipids. This is Isopentenyl phosphate kinase from Haloferax volcanii (strain ATCC 29605 / DSM 3757 / JCM 8879 / NBRC 14742 / NCIMB 2012 / VKM B-1768 / DS2) (Halobacterium volcanii).